A 1391-amino-acid chain; its full sequence is Axoneme-associated protein mst101(2) (1391 aa).

Disordered stretches follow at residues Glu-170–Leu-213 and Ser-280–Leu-300. A compositionally biased stretch (basic residues) spans Thr-184–Ser-201. Residues Lys-291 to Leu-300 are compositionally biased toward basic and acidic residues. 59 consecutive repeat copies span residues Lys-332–Glu-347, Lys-348–Glu-363, Lys-364–Glu-379, Lys-380–Glu-395, Lys-396–Glu-411, Lys-412–Glu-427, Arg-428–Glu-443, Lys-444–Glu-459, Arg-460–Glu-475, Lys-476–Glu-491, Arg-492–Ile-507, Lys-508–Glu-523, Lys-524–Glu-539, Lys-540–Glu-555, Lys-556–Glu-571, Lys-572–Glu-587, Lys-588–Glu-603, Arg-604–Glu-619, Lys-620–Glu-635, Arg-636–Glu-651, Lys-652–Glu-667, Lys-668–Glu-683, Lys-684–Glu-699, Lys-700–Glu-715, Arg-716–Glu-731, Lys-732–Lys-747, Asn-748–Glu-763, Lys-764–Lys-779, Lys-780–Lys-795, Lys-796–Lys-811, Lys-812–Lys-827, Lys-828–Lys-843, Lys-844–Lys-859, Lys-860–Lys-875, Lys-876–Lys-891, Lys-892–Lys-907, Lys-908–Lys-923, Lys-924–Lys-939, Lys-940–Asn-955, Lys-956–Leu-971, Gly-972–Ala-987, Ala-988–Arg-1003, Ala-1004–Arg-1019, Ala-1020–Arg-1035, Ala-1036–Arg-1051, Ala-1052–Arg-1067, Ala-1068–Arg-1083, Ala-1084–Arg-1099, Ala-1100–Arg-1115, Ala-1116–Ala-1131, Ala-1132–Ala-1147, Ala-1148–Ala-1163, Ala-1164–Ala-1179, Ala-1180–Leu-1195, Ala-1196–Ala-1211, Ala-1212–Ala-1227, Ala-1228–Ala-1243, Ala-1244–Ala-1259, and Ala-1260–Ala-1275. A 59 X 16 AA approximate tandem repeats of [KR]-K-X-C-X-X-X-A-K-X-X-K-X-X-X-E region spans residues Lys-332–Ala-1275. The disordered stretch occupies residues Leu-370–Lys-429. The interval Lys-516–Lys-577 is disordered. Over residues Lys-517–Lys-577 the composition is skewed to basic and acidic residues. Over residues Ala-729–Lys-765 the composition is skewed to basic residues. Disordered regions lie at residues Ala-729–Ala-881, Glu-900–Arg-922, and Lys-934–Lys-1013. A compositionally biased stretch (basic and acidic residues) spans Lys-766 to Ala-881. Composition is skewed to basic residues over residues Lys-934 to Lys-949 and Lys-956 to Lys-976. A compositionally biased stretch (basic and acidic residues) spans Arg-977–Lys-1013. Disordered stretches follow at residues Glu-1076–Gln-1095 and Lys-1104–Ala-1212. Over residues Lys-1353–Lys-1370 the composition is skewed to basic and acidic residues. A disordered region spans residues Lys-1353–Cys-1391. Over residues Asn-1371–Cys-1391 the composition is skewed to basic residues.

Testis. Primary spermatocytes and early spermatids.

The protein localises to the cytoplasm. Its function is as follows. Possible structural role in the sperm tail. The chain is Axoneme-associated protein mst101(2) (mst101(2)) from Drosophila hydei (Fruit fly).